Consider the following 144-residue polypeptide: uncharacterized protein (144 aa).

Transmembrane regions (helical) follow at residues leucine 76–leucine 96 and isoleucine 105–tyrosine 125.

The protein belongs to the RseC family.

The protein localises to the cell inner membrane. This is an uncharacterized protein from Haemophilus influenzae (strain ATCC 51907 / DSM 11121 / KW20 / Rd).